A 261-amino-acid polypeptide reads, in one-letter code: Indole-3-glycerol phosphate synthase (261 aa).

This sequence belongs to the TrpC family.

It catalyses the reaction 1-(2-carboxyphenylamino)-1-deoxy-D-ribulose 5-phosphate + H(+) = (1S,2R)-1-C-(indol-3-yl)glycerol 3-phosphate + CO2 + H2O. The protein operates within amino-acid biosynthesis; L-tryptophan biosynthesis; L-tryptophan from chorismate: step 4/5. This chain is Indole-3-glycerol phosphate synthase, found in Burkholderia pseudomallei (strain 1710b).